Here is a 485-residue protein sequence, read N- to C-terminus: Aspartyl/glutamyl-tRNA(Asn/Gln) amidotransferase subunit B (485 aa).

This sequence belongs to the GatB/GatE family. GatB subfamily. As to quaternary structure, heterotrimer of A, B and C subunits.

It carries out the reaction L-glutamyl-tRNA(Gln) + L-glutamine + ATP + H2O = L-glutaminyl-tRNA(Gln) + L-glutamate + ADP + phosphate + H(+). It catalyses the reaction L-aspartyl-tRNA(Asn) + L-glutamine + ATP + H2O = L-asparaginyl-tRNA(Asn) + L-glutamate + ADP + phosphate + 2 H(+). Allows the formation of correctly charged Asn-tRNA(Asn) or Gln-tRNA(Gln) through the transamidation of misacylated Asp-tRNA(Asn) or Glu-tRNA(Gln) in organisms which lack either or both of asparaginyl-tRNA or glutaminyl-tRNA synthetases. The reaction takes place in the presence of glutamine and ATP through an activated phospho-Asp-tRNA(Asn) or phospho-Glu-tRNA(Gln). This is Aspartyl/glutamyl-tRNA(Asn/Gln) amidotransferase subunit B from Borrelia hermsii (strain HS1 / DAH).